The chain runs to 385 residues: Cellulase CelDZ1 (385 aa).

A helical membrane pass occupies residues 6 to 26 (INKWYFFVGMLVIFAVIISLI). Residues H87, 91-92 (WF), Y118, and H153 each bind substrate. E192 functions as the Proton donor in the catalytic mechanism. Y261 provides a ligand contact to substrate. E294 (nucleophile) is an active-site residue. Substrate-binding positions include 300–301 (AS), W328, and 333–335 (KNE).

This sequence belongs to the glycosyl hydrolase 5 (cellulase A) family. In terms of assembly, monomer.

The protein localises to the cell membrane. The enzyme catalyses Endohydrolysis of (1-&gt;4)-beta-D-glucosidic linkages in cellulose, lichenin and cereal beta-D-glucans.. Its activity is regulated as follows. Activity is enhanced by 1mM Mn(2+), but is not affected by 1mM Ca(2+), Mg(2+), Zn(2+), K(+), Na(+) or Li(+). Activity is not inhibited by EDTA (in vitro). Functionally, thermostable endoglucanase that has high activity with soluble polymeric substrates containing beta-1,4-glycosidic bonds, such as carboxymethyl cellulose (CMC) and barley beta-D-glucan (in vitro). Has no activity with cellobiose and filter paper. Has no activity with substrates containing beta-1,3-linked glycans, such as laminarin. Likewise, lacks activity with xylan, galactomannan and pectin. The chain is Cellulase CelDZ1 from Thermoanaerobacterium sp.